Here is a 523-residue protein sequence, read N- to C-terminus: Ribonuclease Y (523 aa).

A helical membrane pass occupies residues 3–23; the sequence is VWYAIGSIIFGLLVGVSVYLI. In terms of domain architecture, KH spans 213-279; the sequence is LVNVINLPND…TKTIEKLVED (67 aa). The HD domain occupies 339–432; that stretch reads ALGHSIEVAN…VCAADTLSAA (94 aa).

Belongs to the RNase Y family.

It is found in the cell membrane. Functionally, endoribonuclease that initiates mRNA decay. The chain is Ribonuclease Y from Helicobacter hepaticus (strain ATCC 51449 / 3B1).